The sequence spans 240 residues: MTIDTVILDIEGTVCPITFVKDTLFPYFLTKLPSILSSIEFPLSTSSSTNDDPIIQILKQLPESITISNESVFSYLKNLVDQDIKDPILKSLQGYIWEKGYEIGDLKAPIYKDSIKFIENFNKKIYIYSSGSIKAQILLFGHAEKDQESINLNPFLKGYFDITTAGFKNKSESYIKILNEINKSNDPSSVLFLSDNVNEVKSAIESGMNSYIVIRPGNAPLSDDDKSTYKTIHSLDELTL.

Residues aspartate 9 and glutamate 11 each coordinate Mg(2+). Substrate contacts are provided by residues 129 to 130 (SS) and lysine 168. Residue aspartate 195 coordinates Mg(2+).

It belongs to the HAD-like hydrolase superfamily. MasA/MtnC family. Monomer. It depends on Mg(2+) as a cofactor.

Its subcellular location is the cytoplasm. It is found in the nucleus. The catalysed reaction is 5-methylsulfanyl-2,3-dioxopentyl phosphate + H2O = 1,2-dihydroxy-5-(methylsulfanyl)pent-1-en-3-one + phosphate. It functions in the pathway amino-acid biosynthesis; L-methionine biosynthesis via salvage pathway; L-methionine from S-methyl-5-thio-alpha-D-ribose 1-phosphate: step 3/6. It participates in amino-acid biosynthesis; L-methionine biosynthesis via salvage pathway; L-methionine from S-methyl-5-thio-alpha-D-ribose 1-phosphate: step 4/6. Bifunctional enzyme that catalyzes the enolization of 2,3-diketo-5-methylthiopentyl-1-phosphate (DK-MTP-1-P) into the intermediate 2-hydroxy-3-keto-5-methylthiopentenyl-1-phosphate (HK-MTPenyl-1-P), which is then dephosphorylated to form the acireductone 1,2-dihydroxy-3-keto-5-methylthiopentene (DHK-MTPene). The polypeptide is Enolase-phosphatase E1 (Candida tropicalis (strain ATCC MYA-3404 / T1) (Yeast)).